A 1009-amino-acid polypeptide reads, in one-letter code: DNA polymerase catalytic subunit (1009 aa).

It belongs to the DNA polymerase type-B family.

It is found in the host nucleus. The catalysed reaction is DNA(n) + a 2'-deoxyribonucleoside 5'-triphosphate = DNA(n+1) + diphosphate. This is DNA polymerase catalytic subunit (9) from Saimiri sciureus (Common squirrel monkey).